The following is a 705-amino-acid chain: Elongation factor G (705 aa).

One can recognise a tr-type G domain in the interval 8-290; the sequence is ERYRNFGIMA…GVVHLLPSPA (283 aa). Residues 17–24, 88–92, and 142–145 contribute to the GTP site; these read AHIDAGKT, DTPGH, and NKMD. Residues 290 to 309 are disordered; it reads ADRPPVQGIDENEKEDTRDA.

It belongs to the TRAFAC class translation factor GTPase superfamily. Classic translation factor GTPase family. EF-G/EF-2 subfamily.

It localises to the cytoplasm. Its function is as follows. Catalyzes the GTP-dependent ribosomal translocation step during translation elongation. During this step, the ribosome changes from the pre-translocational (PRE) to the post-translocational (POST) state as the newly formed A-site-bound peptidyl-tRNA and P-site-bound deacylated tRNA move to the P and E sites, respectively. Catalyzes the coordinated movement of the two tRNA molecules, the mRNA and conformational changes in the ribosome. This chain is Elongation factor G, found in Xanthomonas campestris pv. campestris (strain 8004).